We begin with the raw amino-acid sequence, 897 residues long: Translation initiation factor IF-2 (897 aa).

Disordered regions lie at residues R69–Q88 and R95–K304. Residues S101–Q161 show a composition bias toward basic and acidic residues. Residues K162–Q179 show a composition bias toward low complexity. Basic and acidic residues-rich tracts occupy residues E180–Q196, K203–V217, W226–D239, and R277–N286. Positions P287–K296 are enriched in basic residues. The 170-residue stretch at P397–K566 folds into the tr-type G domain. The interval G406–T413 is G1. A GTP-binding site is contributed by G406–T413. The segment at G431 to H435 is G2. Positions D452–G455 are G3. GTP contacts are provided by residues D452–H456 and N506–D509. Residues N506 to D509 are G4. The interval S542–K544 is G5.

This sequence belongs to the TRAFAC class translation factor GTPase superfamily. Classic translation factor GTPase family. IF-2 subfamily.

The protein resides in the cytoplasm. One of the essential components for the initiation of protein synthesis. Protects formylmethionyl-tRNA from spontaneous hydrolysis and promotes its binding to the 30S ribosomal subunits. Also involved in the hydrolysis of GTP during the formation of the 70S ribosomal complex. In Aeromonas hydrophila subsp. hydrophila (strain ATCC 7966 / DSM 30187 / BCRC 13018 / CCUG 14551 / JCM 1027 / KCTC 2358 / NCIMB 9240 / NCTC 8049), this protein is Translation initiation factor IF-2.